We begin with the raw amino-acid sequence, 82 residues long: Penaeidin-3h (82 aa).

A signal peptide spans 1–19 (MRLVVCLVFLASFALVCQG). Gln20 is subject to Pyrrolidone carboxylic acid. 2 cysteine pairs are disulfide-bonded: Cys55/Cys73 and Cys67/Cys74. Position 81 is a serine amide (Ser81).

This sequence belongs to the penaeidin family.

Its subcellular location is the cytoplasmic granule. Antibacterial and antifungal activity. Presents chitin-binding activity. This Penaeus vannamei (Whiteleg shrimp) protein is Penaeidin-3h.